The chain runs to 387 residues: Cytochrome b (387 aa).

Transmembrane regions (helical) follow at residues 32 to 52 (FGFF…LLAM), 76 to 98 (WLLR…VHML), 113 to 133 (LWVS…LGYV), 179 to 199 (FFSL…LHII), 225 to 245 (FTIK…AFVF), 290 to 310 (LGVL…FLTI), 325 to 345 (LFWS…QPAA), and 353 to 373 (LYST…IYMV). Positions 82 and 96 each coordinate heme b. Heme b contacts are provided by His-183 and His-197.

It belongs to the cytochrome b family. As to quaternary structure, the main subunits of complex b-c1 are: cytochrome b, cytochrome c1 and the Rieske protein. Heme b serves as cofactor.

The protein localises to the mitochondrion inner membrane. Its function is as follows. Component of the ubiquinol-cytochrome c reductase complex (complex III or cytochrome b-c1 complex) that is part of the mitochondrial respiratory chain. The b-c1 complex mediates electron transfer from ubiquinol to cytochrome c. Contributes to the generation of a proton gradient across the mitochondrial membrane that is then used for ATP synthesis. The protein is Cytochrome b (cytB) of Dictyostelium citrinum (Slime mold).